The chain runs to 549 residues: Cation/acetate symporter ActP (549 aa).

13 helical membrane passes run 33 to 53, 77 to 97, 103 to 123, 148 to 168, 183 to 203, 206 to 226, 262 to 282, 303 to 323, 355 to 375, 404 to 424, 428 to 448, 464 to 484, and 493 to 513; these read WQAIIMFLIFVVFTLGITYWA, LAIAGDYMSAASFLGISALVF, GLIYSLGFLVGWPIILFLIAE, ILSACGSLVVVALYLIAQMVG, IAVVLVGVLMMMYVLFGGMLA, WVQIIKAVLLLFGASFMAFMV, ISALSLGLGLMFGTAGLPHIL, GFMGYFYILTFIIGFGAIMLV, LFLGFISAVAFATILAVVAGL, VSKITVLILGVIAIILGVLFE, IAFMVGLAFAIAASCNFPIIL, GGWLGLITAVVLMILGPTIWV, and IFPYEYPALFSISVAFLGIWF.

Belongs to the sodium:solute symporter (SSF) (TC 2.A.21) family.

It is found in the cell inner membrane. In terms of biological role, transports acetate. This is Cation/acetate symporter ActP from Escherichia coli O17:K52:H18 (strain UMN026 / ExPEC).